The chain runs to 620 residues: MDSHTLLQALIYLGSAALIVPIAVRLGLGSVLGYLIAGCIIGPWGLRLVTDAESILHFAEIGVVLMLFVIGLELDPQRLWKLRASVFGGGALQMVVCGGLIGLFCMFLGLRWQVAELIGMTLALSSTAIAMQAMNERNLTVSQVGRSAFAVLLFQDIAAIPLVAMIPLLAASGASTTLGAFALSALKVAGALALVVLLGRYVTRPALRFVARSGLREVFSAVALFLVFGFGLLLEEVGLSMAMGAFLAGVLLASSEYRHALESDIEPFKGLLLGLFFIGVGMSIDFGTLVENPLRILLLLAGFLAIKIVMLWLVARPLGVPAKQRRWFAVLLGQGSEFAFVVFGAAQMAGVLEPEWAKALTLAVALSMAATPIFLMLLTRMEKTEKGEAREADEIDEEQPRVIVAGFGRFGQIAGRLLLSSGVKMVVLDHDPDHIETLRKFGMKVFYGDATRMDLLESAGAAKAEVLINAIDDPQTNLQLSELVKSHFPHLQIIARARDVDHYIRLRQAGVAMPERETFEGALKSGRQALEALGLGRYEARERADLFRHFNTRMVEEMAKGENDPLSRAAAYKRTSAMLSEIITEDREHLSLIQRHGWQGTAEGKHSGEAADEPEVKPSI.

12 helical membrane-spanning segments follow: residues 4–24, 26–46, 54–74, 90–110, 114–134, 149–169, 178–198, 218–238, 270–290, 294–314, 327–347, and 359–379; these read HTLL…PIAV, LGLG…PWGL, SILH…GLEL, GALQ…FLGL, VAEL…MQAM, FAVL…IPLL, LGAF…VVLL, VFSA…EEVG, GLLL…GTLV, LRIL…LWLV, WFAV…GAAQ, and ALTL…MLLT. Residues 399–518 enclose the RCK N-terminal domain; that stretch reads QPRVIVAGFG…AGVAMPERET (120 aa). Residues 599–620 form a disordered region; the sequence is QGTAEGKHSGEAADEPEVKPSI.

The protein belongs to the monovalent cation:proton antiporter 2 (CPA2) transporter (TC 2.A.37) family. KefC subfamily. As to quaternary structure, homodimer. Interacts with the regulatory subunit KefF.

The protein resides in the cell inner membrane. Pore-forming subunit of a potassium efflux system that confers protection against electrophiles. Catalyzes K(+)/H(+) antiport. This is Glutathione-regulated potassium-efflux system protein KefC from Salmonella heidelberg (strain SL476).